Reading from the N-terminus, the 228-residue chain is Ion-translocating oxidoreductase complex subunit E (228 aa).

5 helical membrane-spanning segments follow: residues 18–38 (ALVQ…ATNA), 69–89 (IPIY…LINA), 92–112 (FGLY…CIVV), 125–145 (LLSA…MFVL), and 182–202 (PFLL…MLAV).

The protein belongs to the NqrDE/RnfAE family. As to quaternary structure, the complex is composed of six subunits: RnfA, RnfB, RnfC, RnfD, RnfE and RnfG.

It is found in the cell inner membrane. In terms of biological role, part of a membrane-bound complex that couples electron transfer with translocation of ions across the membrane. In Cronobacter sakazakii (strain ATCC BAA-894) (Enterobacter sakazakii), this protein is Ion-translocating oxidoreductase complex subunit E.